Reading from the N-terminus, the 940-residue chain is Lysine-specific demethylase 7A (940 aa).

The PHD-type zinc finger occupies 37-88 (PVYCVCRQPYDVNRFMIECDVCKDWFHGSCVGVEEHHAVDIDLYHCPDCAAL). The segment at 97–114 (RRNWHRHDYTEVDDGSKP) is linker. One can recognise a JmjC domain in the interval 230 to 386 (FSDTKMSELV…MQLRCYEMEK (157 aa)). Thr-279 is a substrate binding site. Residues His-282 and Asp-284 each contribute to the Fe cation site. Lys-299 provides a ligand contact to substrate. His-354 is a Fe cation binding site. Disordered stretches follow at residues 483-509 (VKSQGIPSVCPVSRPSNEASPPYHSRR), 599-670 (LYTA…PDCT), 710-729 (SQKPSRQEIPVKRECPTSTS), 818-854 (NAQDLSRSQKHIKKESSSEINQKAQSRHCVDSNSSSI), and 876-920 (SPER…MATA). Ser-604 carries the phosphoserine modification. Polar residues predominate over residues 613–623 (TQNANMKTEQS). Residues 714–724 (SRQEIPVKREC) show a composition bias toward basic and acidic residues.

It belongs to the JHDM1 histone demethylase family. JHDM1D subfamily. It depends on Fe(2+) as a cofactor.

The protein resides in the nucleus. The catalysed reaction is N(6),N(6)-dimethyl-L-lysyl(9)-[histone H3] + 2 2-oxoglutarate + 2 O2 = L-lysyl(9)-[histone H3] + 2 formaldehyde + 2 succinate + 2 CO2. It catalyses the reaction N(6),N(6)-dimethyl-L-lysyl(27)-[histone H3] + 2 2-oxoglutarate + 2 O2 = L-lysyl(27)-[histone H3] + 2 formaldehyde + 2 succinate + 2 CO2. It carries out the reaction N(6),N(6)-dimethyl-L-lysyl(36)-[histone H3] + 2-oxoglutarate + O2 = N(6)-methyl-L-lysyl(36)-[histone H3] + formaldehyde + succinate + CO2. The enzyme catalyses N(6)-methyl-L-lysyl(20)-[histone H4] + 2-oxoglutarate + O2 = L-lysyl(20)-[histone H4] + formaldehyde + succinate + CO2. Functionally, histone demethylase required for brain development. Specifically demethylates dimethylated 'Lys-9', 'Lys-27' and 'Lys-36' (H3K9me2, H3K27me2, H3K36me2, respectively) of histone H3 and monomethylated histone H4 'Lys-20' residue (H4K20Me1), thereby playing a central role in histone code. Specifically binds trimethylated 'Lys-4' of histone H3 (H3K4me3), affecting histone demethylase specificity: in presence of H3K4me3, it has no demethylase activity toward H3K9me2, while it has high activity toward H3K27me2. Demethylates H3K9me2 in absence of H3K4me3. Has activity toward H4K20Me1 only when nucleosome is used as a substrate and when not histone octamer is used as substrate. The chain is Lysine-specific demethylase 7A (Kdm7a) from Mus musculus (Mouse).